Reading from the N-terminus, the 573-residue chain is DNA polymerase lambda (573 aa).

The BRCT domain maps to 35–131 (DARGWLSSLR…KLTDTDGFSL (97 aa)). The segment at 126–235 (TDGFSLSSPK…GPDPAPEALG (110 aa)) is disordered. Positions 127–149 (DGFSLSSPKRSLNEPQPSKSGQD) are enriched in polar residues. The tract at residues 263 to 277 (KAYNVQGDKWRALGY) is DNA-binding. Lys-310 acts as the Schiff-base intermediate with DNA in catalysis. Residues 343–346 (GTKT) form a DNA-binding region. Residues Arg-384, 415–418 (SFRR), and 424–427 (GDVD) each bind dCTP. Residues 418-427 (RGKVTCGDVD) are involved in primer binding. Positions 425, 427, and 488 each coordinate Mn(2+). A DNA-binding region spans residues 464 to 503 (ENGQQQKYLGVCRLPGAGQRHRRLDIIVVPYSEFACALLY). Asn-511 is a dCTP binding site.

This sequence belongs to the DNA polymerase type-X family. As to quaternary structure, interacts with PCNA. Interacts with PAXX; promoting POLL recruitment to double-strand breaks (DSBs) and stimulation of the end-filling activity of POLL. Interacts with XRCC4; promoting POLL recruitment to double-strand breaks (DSBs) and stimulation of the end-filling activity of POLL. Interacts with NHEJ1/XLF; promoting POLL recruitment to double-strand breaks (DSBs) and stimulation of the end-filling activity of POLL. Mn(2+) serves as cofactor.

The protein localises to the nucleus. It catalyses the reaction DNA(n) + a 2'-deoxyribonucleoside 5'-triphosphate = DNA(n+1) + diphosphate. Functionally, DNA polymerase that functions in several pathways of DNA repair. Involved in base excision repair (BER) responsible for repair of lesions that give rise to abasic (AP) sites in DNA. Also contributes to DNA double-strand break repair by non-homologous end joining and homologous recombination. Has both template-dependent and template-independent (terminal transferase) DNA polymerase activities. Also has a 5'-deoxyribose-5-phosphate lyase (dRP lyase) activity. This chain is DNA polymerase lambda, found in Rattus norvegicus (Rat).